The chain runs to 62 residues: Lepidopteran-selective toxin (62 aa).

Residues 1-24 (MKFLYGVILIALFLTVMTATLSEA) form the signal peptide. 4 disulfide bridges follow: cysteine 26–cysteine 43, cysteine 29–cysteine 51, cysteine 40–cysteine 56, and cysteine 44–cysteine 58. Residue tyrosine 62 is a propeptide.

The protein belongs to the short scorpion toxin superfamily. Chloride channel inhibitor family. In terms of tissue distribution, expressed by the venom gland.

It is found in the secreted. In terms of biological role, toxin with unknown function in healthy organisms. On glioma cells, interacts with chloride channels (probably ClC-3/CLCN3) and MMP2 at the surface of glioma cells. This complex is then internalized via caveolae, thus inhibiting the chloride channels necessary for cell shrinkage and tumor propagation. Induces flaccid paralysis in H.virescens larvae. Is not toxic to S.falculata larvae or mice. The polypeptide is Lepidopteran-selective toxin (Hottentotta tamulus (Eastern Indian scorpion)).